A 161-amino-acid polypeptide reads, in one-letter code: Ribonuclease P protein component (161 aa).

Belongs to the RnpA family. In terms of assembly, consists of a catalytic RNA component (M1 or rnpB) and a protein subunit.

It carries out the reaction Endonucleolytic cleavage of RNA, removing 5'-extranucleotides from tRNA precursor.. Functionally, RNaseP catalyzes the removal of the 5'-leader sequence from pre-tRNA to produce the mature 5'-terminus. It can also cleave other RNA substrates such as 4.5S RNA. The protein component plays an auxiliary but essential role in vivo by binding to the 5'-leader sequence and broadening the substrate specificity of the ribozyme. The sequence is that of Ribonuclease P protein component from Helicobacter pylori (strain J99 / ATCC 700824) (Campylobacter pylori J99).